The primary structure comprises 855 residues: MDIRKLFLDYFASKGHAVYESMPLVPDDPTLLFTNAGMVQFKDIFTGKVPAPTNPRATSCQLCIRAGGKHNDLENVGYTSRHHTLFEMLGNFSFGDYFKEQAIDHAWEFVTEVLGFSKEVLWVTVHESDDEAFELWQKHVDASRIKRMGDKDNFWQMGDTGACGPCSEIFVDQGEEKFHGSEDYFGGDGDRFLEIWNLVFMQYERSSDGTLTPLPKPSIDTGMGLERVAALKEGKSSNFDSSLFMPMIRKVEELTGKPYHYESGASYRVIADHIRSICFLLAQGVNFDKEGRGYVLRRILRRAVRHGYLLGLNAPFLHEVAEVVCGQMGDHYGYLKEKREHIKRLTFQEEERFFATIAGGMEVFKKELEKTQSVFSGEAAFKLYDTFGFPLDLTEDMLREKGIRVDLAAFEACMKEQRARAKASWKGSGDELKEGDFALLLEAFPSNSFVGYEKEAHTSKLLAILNRDYKRVSSLGAGESGFVMLEETPFYAESGGQCGDEGELRARGRIVAQVQGTKKYFGLNLSRIEALDEICEGETLEAVVSRERLEVQKHHSATHLLHAILRQKLGDHVAQAGSLVEKDRLRFDFSHPKALTHEEVGMVEEEVNRLISLSIPSRTREMRVDEAKASGAMALFGEKYGDLVRVVDFGEASVELCGGTHVENSAHIGSFYITKESGVSAGVRRIEAVCGMAAYHYGKEALQEIAEAKEILKAKELKLGIEKLKEQVRELKSEMSALSSSKSGAISEGVMMGETRVIVETLEAGDIKNSIDEIKNRYEKVAVLLLQVKEEKVMLAAGVKGEDRIKAGAWIKEIAPILGGGGGGRDDFAQAGGKDASKADEALQSAKNYALERLA.

The Zn(2+) site is built by H555, H559, C657, and H661.

It belongs to the class-II aminoacyl-tRNA synthetase family. It depends on Zn(2+) as a cofactor.

The protein localises to the cytoplasm. The catalysed reaction is tRNA(Ala) + L-alanine + ATP = L-alanyl-tRNA(Ala) + AMP + diphosphate. Functionally, catalyzes the attachment of alanine to tRNA(Ala) in a two-step reaction: alanine is first activated by ATP to form Ala-AMP and then transferred to the acceptor end of tRNA(Ala). Also edits incorrectly charged Ser-tRNA(Ala) and Gly-tRNA(Ala) via its editing domain. This Wolinella succinogenes (strain ATCC 29543 / DSM 1740 / CCUG 13145 / JCM 31913 / LMG 7466 / NCTC 11488 / FDC 602W) (Vibrio succinogenes) protein is Alanine--tRNA ligase.